Consider the following 445-residue polypeptide: UDP-N-acetylglucosamine--peptide N-acetylglucosaminyltransferase stabilizing protein GtfB (445 aa).

Positions 55 to 171 (KPLYFNQVPV…TLPGQSMRYF (117 aa)) are glycosyltransferase 1.

It belongs to the GtfB family. As to quaternary structure, interacts with glycosyltransferase GtfA; probably forms a heterotetramer with 2 subunits each of GtfA and GtfB. Part of the accessory SecA2/SecY2 protein translocation apparatus.

The protein localises to the cell membrane. It participates in protein modification; protein glycosylation. In terms of biological role, required for the polymorphic O-glycosylation of the serine-rich repeat protein PsrP. A stabilizing protein that is part of the accessory SecA2/SecY2 system specifically required to export serine-rich repeat cell wall proteins encoded upstream in the same operon. The GtfA-GtfB complex adds GlcNAc from UDP-GlcNAc to PsrP, attaching the first sugar residue. Stabilizes the glycosylation activity of GtfA. Has no N-acetylglucosaminyl transferase activity on its own. The protein is UDP-N-acetylglucosamine--peptide N-acetylglucosaminyltransferase stabilizing protein GtfB of Streptococcus pneumoniae serotype 4 (strain ATCC BAA-334 / TIGR4).